Here is a 142-residue protein sequence, read N- to C-terminus: Transcriptional regulator MraZ (142 aa).

2 SpoVT-AbrB domains span residues 5 to 51 (ASSL…PRPV) and 77 to 120 (ASDV…DAAR).

This sequence belongs to the MraZ family. In terms of assembly, forms oligomers.

The protein resides in the cytoplasm. It is found in the nucleoid. This chain is Transcriptional regulator MraZ, found in Herminiimonas arsenicoxydans.